The sequence spans 152 residues: Cuticle protein 64 (152 aa).

A run of 7 repeats spans residues 27–30, 33–37, 39–42, 86–89, 92–95, 98–101, and 127–130.

Component of the cuticle of migratory locust which contains more than 100 different structural proteins. The chain is Cuticle protein 64 from Locusta migratoria (Migratory locust).